Reading from the N-terminus, the 582-residue chain is 5-aminolevulinate synthase, erythroid-specific, mitochondrial (582 aa).

Arg-158 is a succinyl-CoA binding site. 2 residues coordinate pyridoxal 5'-phosphate: Cys-253 and Phe-254. Ser-275 and Arg-294 together coordinate succinyl-CoA. Ser-327, His-355, and Thr-383 together coordinate pyridoxal 5'-phosphate. Lys-386 is an active-site residue. An N6-(pyridoxal phosphate)lysine modification is found at Lys-386. Pyridoxal 5'-phosphate contacts are provided by Thr-415 and Thr-416. Thr-503 serves as a coordination point for succinyl-CoA.

The protein belongs to the class-II pyridoxal-phosphate-dependent aminotransferase family. Homodimer. Requires pyridoxal 5'-phosphate as cofactor.

It is found in the mitochondrion inner membrane. It catalyses the reaction succinyl-CoA + glycine + H(+) = 5-aminolevulinate + CO2 + CoA. It functions in the pathway porphyrin-containing compound metabolism; protoporphyrin-IX biosynthesis; 5-aminolevulinate from glycine: step 1/1. In terms of biological role, catalyzes the pyridoxal 5'-phosphate (PLP)-dependent condensation of succinyl-CoA and glycine to form aminolevulinic acid (ALA), with CoA and CO2 as by-products. Contributes significantly to heme formation during erythropoiesis. The protein is 5-aminolevulinate synthase, erythroid-specific, mitochondrial (alas2) of Opsanus tau (Oyster toadfish).